The chain runs to 68 residues: Large ribosomal subunit protein bL33c (68 aa).

This sequence belongs to the bacterial ribosomal protein bL33 family.

It localises to the plastid. It is found in the chloroplast. This chain is Large ribosomal subunit protein bL33c, found in Amborella trichopoda.